The following is a 535-amino-acid chain: Zinc finger protein squeeze (535 aa).

Composition is skewed to low complexity over residues 70–97 (MVME…HPPQ) and 131–142 (SSASGSGSNGSS). Residues 70–157 (MVMEQQPHPD…RRGDGDQAKP (88 aa)) are disordered. Positions 145 to 156 (EESRRGDGDQAK) are enriched in basic and acidic residues. C2H2-type zinc fingers lie at residues 158 to 180 (YKCG…TRIH), 186 to 208 (YRCE…IRTH), 214 to 238 (YKCR…SRCH), 244 to 266 (FKCN…IPKH), and 275 to 297 (HICN…LQKH). Threonine 395 is modified (phosphothreonine). Phosphoserine occurs at positions 399 and 401. Positions 417–475 (TPQHHLQQQQQQQQQQQAQQQQQAQHQPSPGPGNSAFTPLSATVAPPPHLQQHRGPPGS) are disordered. Residues 419-443 (QHHLQQQQQQQQQQQAQQQQQAQHQ) are compositionally biased toward low complexity. Phosphoserine is present on serine 475. 2 positions are modified to phosphotyrosine: tyrosine 479 and tyrosine 481.

Belongs to the krueppel C2H2-type zinc-finger protein family. As to quaternary structure, interacts with nab; which acts as a coactivator. Interacts with ap. As to expression, largely restricted to subsets of cells in the CNS throughout embryonic and first instar larval (L1) development. Expressed in a population of lateral interneurons, primarily projecting axons in the anterior and posterior commissures. Overlaps with ap within the thoracic ap cluster. By stage 17, it is restricted to 2 neurons within the ap-cluster, with one neuron typically continuing to display higher levels of expression. Selectively expressed at higher levels within the FMRFa Tv neurons. Expressed in all leucokinergic cells.

The protein localises to the nucleus. Its function is as follows. Transcription factor involved in neuronal fate specification. First required in embryonic CNS development to define the number of cells that express apterous (ap) in the ap thoracic cluster of interneurons. Later on, it plays a central role in the combinatorial code of transcription factors that specifies the fate of the Tv neuron in the ap cluster by participating in the transcription regulation of FMRFa in Tv cells. Also required for projection neuron dendritic targeting. This is Zinc finger protein squeeze (sqz) from Drosophila melanogaster (Fruit fly).